The chain runs to 24 residues: Brevinin-1Ecb (24 aa).

Cys-18 and Cys-24 are disulfide-bonded.

Expressed by the skin glands.

Its subcellular location is the secreted. Its function is as follows. Shows antibacterial activity against representative Gram-negative and Gram-positive bacterial species, and hemolytic activity. This is Brevinin-1Ecb from Pelophylax ridibundus (Marsh frog).